The chain runs to 429 residues: Inner membrane transport protein RhmT (429 aa).

Residues 1–16 lie on the Cytoplasmic side of the membrane; sequence MSTALLDAVVKKNRVR. Residues 17 to 37 form a helical membrane-spanning segment; that stretch reads LIPFMLALYVLAFLDRSNIGF. The Periplasmic segment spans residues 38-54; it reads AKQTYQIDTGLSNEAYA. A helical transmembrane segment spans residues 55–75; it reads LGAGIFFVVYAFLGVPANLLM. Topologically, residues 76–81 are cytoplasmic; that stretch reads RKLGAR. Residues 82–102 form a helical membrane-spanning segment; the sequence is TWIGTTTLLWGFLSAAMAWAD. Residues 103–143 lie on the Periplasmic side of the membrane; sequence TEAKFLIVRTLLRAAEAGFFPGMIYLTSQWFPQRNRASIMG. A helical transmembrane segment spans residues 144–164; sequence LFYMGAPLALTLGSPLSGALL. Topologically, residues 165 to 174 are cytoplasmic; the sequence is EMHGFMGHPG. A helical transmembrane segment spans residues 175 to 195; the sequence is WFWMFVIEGLLAVGAGVFTFF. Residues 196 to 242 are Periplasmic-facing; that stretch reads WLDDTPEQARFLSKQEKTLLINQLASEEQQKVTSRLSDALRNGRVWQ. The helical transmembrane segment at 243 to 263 threads the bilayer; it reads LAIIYLTIQVAVYGLIFFLPT. The Cytoplasmic segment spans residues 264–274; that stretch reads QVAALLGTKVG. Residues 275–295 traverse the membrane as a helical segment; the sequence is FTASVVTAIPWVAALFGTWLI. At 296–324 the chain is on the periplasmic side; the sequence is PRYSDKTGERRNVAALTLLAAGIGIGLSG. The helical transmembrane segment at 325-345 threads the bilayer; that stretch reads LLSPVMAIVALCVAAIGFIAV. The Cytoplasmic segment spans residues 346 to 361; the sequence is QPVFWTMPTQLLSGTA. A helical transmembrane segment spans residues 362–382; sequence LAAGIGFVNLFGAVGGFIAPI. Residues 383 to 394 are Periplasmic-facing; sequence LRVKAETLFASD. The helical transmembrane segment at 395 to 415 threads the bilayer; it reads AAGLLTLAAVAVIGSLIIFTL. Residues 416-429 lie on the Cytoplasmic side of the membrane; it reads RVNRTVAQTDVAHH.

It belongs to the major facilitator superfamily. Phthalate permease family.

Its subcellular location is the cell inner membrane. The sequence is that of Inner membrane transport protein RhmT (rhmT) from Escherichia coli (strain K12).